We begin with the raw amino-acid sequence, 220 residues long: Peptide methionine sulfoxide reductase MsrA (220 aa).

Residue C52 is part of the active site.

Belongs to the MsrA Met sulfoxide reductase family.

It carries out the reaction L-methionyl-[protein] + [thioredoxin]-disulfide + H2O = L-methionyl-(S)-S-oxide-[protein] + [thioredoxin]-dithiol. The enzyme catalyses [thioredoxin]-disulfide + L-methionine + H2O = L-methionine (S)-S-oxide + [thioredoxin]-dithiol. Has an important function as a repair enzyme for proteins that have been inactivated by oxidation. Catalyzes the reversible oxidation-reduction of methionine sulfoxide in proteins to methionine. The polypeptide is Peptide methionine sulfoxide reductase MsrA (Corynebacterium diphtheriae (strain ATCC 700971 / NCTC 13129 / Biotype gravis)).